The sequence spans 192 residues: Xanthine phosphoribosyltransferase (192 aa).

Xanthine contacts are provided by L20 and N27. 128–132 lines the 5-phospho-alpha-D-ribose 1-diphosphate pocket; that stretch reads ANGQA. K156 provides a ligand contact to xanthine.

Belongs to the purine/pyrimidine phosphoribosyltransferase family. Xpt subfamily. In terms of assembly, homodimer.

The protein localises to the cytoplasm. The enzyme catalyses XMP + diphosphate = xanthine + 5-phospho-alpha-D-ribose 1-diphosphate. It participates in purine metabolism; XMP biosynthesis via salvage pathway; XMP from xanthine: step 1/1. Functionally, converts the preformed base xanthine, a product of nucleic acid breakdown, to xanthosine 5'-monophosphate (XMP), so it can be reused for RNA or DNA synthesis. This is Xanthine phosphoribosyltransferase from Lacticaseibacillus casei (strain BL23) (Lactobacillus casei).